A 284-amino-acid chain; its full sequence is Formyltetrahydrofolate deformylase (284 aa).

In terms of domain architecture, ACT spans 7-90 (TLLVSCPDQP…QIHFSDQLPR (84 aa)). The active site involves aspartate 228.

The protein belongs to the PurU family.

It catalyses the reaction (6R)-10-formyltetrahydrofolate + H2O = (6S)-5,6,7,8-tetrahydrofolate + formate + H(+). Its pathway is purine metabolism; IMP biosynthesis via de novo pathway; formate from 10-formyl-5,6,7,8-tetrahydrofolate: step 1/1. Functionally, catalyzes the hydrolysis of 10-formyltetrahydrofolate (formyl-FH4) to formate and tetrahydrofolate (FH4). The protein is Formyltetrahydrofolate deformylase of Synechocystis sp. (strain ATCC 27184 / PCC 6803 / Kazusa).